The sequence spans 255 residues: Alpha-acetolactate decarboxylase (255 aa).

This sequence belongs to the alpha-acetolactate decarboxylase family.

The enzyme catalyses (2S)-2-acetolactate + H(+) = (R)-acetoin + CO2. It functions in the pathway polyol metabolism; (R,R)-butane-2,3-diol biosynthesis; (R,R)-butane-2,3-diol from pyruvate: step 2/3. In terms of biological role, converts acetolactate into acetoin, which can be excreted by the cells. This may be a mechanism for controlling the internal pH of cells in the stationary stage. This chain is Alpha-acetolactate decarboxylase (alsD), found in Bacillus subtilis (strain 168).